Here is a 252-residue protein sequence, read N- to C-terminus: F-box/SPRY domain-containing protein 1 (252 aa).

The F-box domain maps to 1–48 (MVDPLCNYNVLEAIFSYLELSDLSRCSQVCKSWYHFLNDENSDVWRWH). The B30.2/SPRY domain maps to 58 to 250 (IKSDLLASVT…VSMVYLGTPL (193 aa)).

It belongs to the FBXO45/Fsn family. In terms of assembly, component of an E3 ubiquitin ligase complex composed of hiw and Fsn.

Its subcellular location is the synapse. It functions in the pathway protein modification; protein ubiquitination. Required in the presynaptic motoneuron to down-regulate the levels of wnd and restrain synaptic terminal growth at the neuromuscular junction (NMJ). The polypeptide is F-box/SPRY domain-containing protein 1 (Drosophila mojavensis (Fruit fly)).